Consider the following 234-residue polypeptide: Small ribosomal subunit protein uS3 (234 aa).

One can recognise a KH type-2 domain in the interval 17–86 (VEKFLTKELK…SPQVEVQQVQ (70 aa)).

It belongs to the universal ribosomal protein uS3 family. Part of the 30S ribosomal subunit.

Binds the lower part of the 30S subunit head. This chain is Small ribosomal subunit protein uS3, found in Methanoculleus marisnigri (strain ATCC 35101 / DSM 1498 / JR1).